Consider the following 332-residue polypeptide: UDP-3-O-acylglucosamine N-acyltransferase (332 aa).

His231 functions as the Proton acceptor in the catalytic mechanism.

It belongs to the transferase hexapeptide repeat family. LpxD subfamily. Homotrimer.

It catalyses the reaction a UDP-3-O-[(3R)-3-hydroxyacyl]-alpha-D-glucosamine + a (3R)-hydroxyacyl-[ACP] = a UDP-2-N,3-O-bis[(3R)-3-hydroxyacyl]-alpha-D-glucosamine + holo-[ACP] + H(+). It participates in bacterial outer membrane biogenesis; LPS lipid A biosynthesis. Its function is as follows. Catalyzes the N-acylation of UDP-3-O-acylglucosamine using 3-hydroxyacyl-ACP as the acyl donor. Is involved in the biosynthesis of lipid A, a phosphorylated glycolipid that anchors the lipopolysaccharide to the outer membrane of the cell. This chain is UDP-3-O-acylglucosamine N-acyltransferase, found in Vesicomyosocius okutanii subsp. Calyptogena okutanii (strain HA).